Here is a 436-residue protein sequence, read N- to C-terminus: MLKAIARIVRTPDLLRKIAFTLGLIAVYRMGDFVPATGVDYPAVQQCLAAGNAQGGLYSFVNMFSGGALLQVSVFALGIMPYITASIIVQLLRVVIPRFEQLHQERRRGQATLTQYTRYLTLALALLQATTMASLARTGALLGCSLPLLRDGSILTVLLVVIALTTGCLIVMWFGERITENGVGNGMSLLIFTSIAAGFPAGLGQVVQTQGWRVFAIVMGIGLLTMLAIVFVEESQRRIPVQYAKRQIGSRTVGGSSTYIPVKVNMANVIPVIFASSVLMLPGILIQFNTPQDGSAPAPWITWLSRYFGSGDHPVYMALYFLLIIGFTYFYVSITFNPVEISDNMKRYGGFIPASAPAGPTERYLQYVISRITFVVGALYLGIVAMIPLIAFAVIGTSQNFPLGGTSILIMVGVGLQTVKQVSAQMEQRHYEGLLR.

The next 10 membrane-spanning stretches (helical) occupy residues 18–38 (IAFT…PATG), 69–89 (LLQV…SIIV), 116–138 (YTRY…LART), 154–174 (ILTV…VMWF), 187–207 (MSLL…GQVV), 214–234 (VFAI…FVEE), 266–286 (MANV…GILI), 314–334 (PVYM…YVSI), 375–395 (VVGA…FAVI), and 396–416 (GTSQ…GVGL).

It belongs to the SecY/SEC61-alpha family. Component of the Sec protein translocase complex. Heterotrimer consisting of SecY, SecE and SecG subunits. The heterotrimers can form oligomers, although 1 heterotrimer is thought to be able to translocate proteins. Interacts with the ribosome. Interacts with SecDF, and other proteins may be involved. Interacts with SecA.

Its subcellular location is the cell membrane. Functionally, the central subunit of the protein translocation channel SecYEG. Consists of two halves formed by TMs 1-5 and 6-10. These two domains form a lateral gate at the front which open onto the bilayer between TMs 2 and 7, and are clamped together by SecE at the back. The channel is closed by both a pore ring composed of hydrophobic SecY resides and a short helix (helix 2A) on the extracellular side of the membrane which forms a plug. The plug probably moves laterally to allow the channel to open. The ring and the pore may move independently. The protein is Protein translocase subunit SecY of Micrococcus luteus (Micrococcus lysodeikticus).